The sequence spans 103 residues: Stefin-3 (103 aa).

The Secondary area of contact signature appears at 52-56 (QVVAG).

This sequence belongs to the cystatin family.

It localises to the cytoplasm. Functionally, this is an intracellular thiol proteinase inhibitor. This is Stefin-3 (Stfa3) from Mus musculus (Mouse).